The primary structure comprises 305 residues: Phosphatidate cytidylyltransferase (305 aa).

The next 7 membrane-spanning stretches (helical) occupy residues 24-44, 97-117, 124-144, 151-171, 202-222, 232-252, and 277-297; these read LLVF…AFIV, PEHV…HLVF, LGPI…SVPI, LYGF…IFLI, TVVG…IFYS, IAMP…GFFG, and MLDV…ILLI.

Belongs to the CDS family.

The protein resides in the cell membrane. The enzyme catalyses a 1,2-diacyl-sn-glycero-3-phosphate + CTP + H(+) = a CDP-1,2-diacyl-sn-glycerol + diphosphate. The protein operates within phospholipid metabolism; CDP-diacylglycerol biosynthesis; CDP-diacylglycerol from sn-glycerol 3-phosphate: step 3/3. The protein is Phosphatidate cytidylyltransferase (cdsA) of Chlamydia muridarum (strain MoPn / Nigg).